A 259-amino-acid polypeptide reads, in one-letter code: Adenosylcobinamide-GDP ribazoletransferase (259 aa).

7 helical membrane-spanning segments follow: residues Phe36–Leu56, Met65–Leu85, Ile108–Phe128, Leu133–Ile153, Gly175–Ile195, Ile201–Ile221, and Gly238–Ala258.

The protein belongs to the CobS family. Mg(2+) is required as a cofactor.

Its subcellular location is the cell inner membrane. It catalyses the reaction alpha-ribazole + adenosylcob(III)inamide-GDP = adenosylcob(III)alamin + GMP + H(+). It carries out the reaction alpha-ribazole 5'-phosphate + adenosylcob(III)inamide-GDP = adenosylcob(III)alamin 5'-phosphate + GMP + H(+). It functions in the pathway cofactor biosynthesis; adenosylcobalamin biosynthesis; adenosylcobalamin from cob(II)yrinate a,c-diamide: step 7/7. Functionally, joins adenosylcobinamide-GDP and alpha-ribazole to generate adenosylcobalamin (Ado-cobalamin). Also synthesizes adenosylcobalamin 5'-phosphate from adenosylcobinamide-GDP and alpha-ribazole 5'-phosphate. This is Adenosylcobinamide-GDP ribazoletransferase from Prochlorococcus marinus (strain SARG / CCMP1375 / SS120).